The following is a 173-amino-acid chain: Putative phosphoesterase GTNG_0743 (173 aa).

Histidine 34 acts as the Proton donor in catalysis. Short sequence motifs (HXTX) lie at residues 34-37 (HITL) and 115-118 (HITI). Histidine 115 serves as the catalytic Proton acceptor.

The protein belongs to the 2H phosphoesterase superfamily. YjcG family.

This Geobacillus thermodenitrificans (strain NG80-2) protein is Putative phosphoesterase GTNG_0743.